We begin with the raw amino-acid sequence, 198 residues long: Glycerol-3-phosphate acyltransferase (198 aa).

5 helical membrane-spanning segments follow: residues 2-22 (YAVL…AYIF), 48-70 (LGYK…AVLI), 75-97 (MGNT…PVFL), 111-131 (VVMT…VTVI), and 154-174 (IFWN…LAIF).

Belongs to the PlsY family. As to quaternary structure, probably interacts with PlsX.

Its subcellular location is the cell membrane. The enzyme catalyses an acyl phosphate + sn-glycerol 3-phosphate = a 1-acyl-sn-glycero-3-phosphate + phosphate. It functions in the pathway lipid metabolism; phospholipid metabolism. Its function is as follows. Catalyzes the transfer of an acyl group from acyl-phosphate (acyl-PO(4)) to glycerol-3-phosphate (G3P) to form lysophosphatidic acid (LPA). This enzyme utilizes acyl-phosphate as fatty acyl donor, but not acyl-CoA or acyl-ACP. This is Glycerol-3-phosphate acyltransferase from Thermoanaerobacter sp. (strain X514).